The following is a 393-amino-acid chain: Anhydro-N-acetylmuramic acid kinase (393 aa).

Gly9–Asp16 contributes to the ATP binding site.

It belongs to the anhydro-N-acetylmuramic acid kinase family.

It catalyses the reaction 1,6-anhydro-N-acetyl-beta-muramate + ATP + H2O = N-acetyl-D-muramate 6-phosphate + ADP + H(+). The protein operates within amino-sugar metabolism; 1,6-anhydro-N-acetylmuramate degradation. It functions in the pathway cell wall biogenesis; peptidoglycan recycling. Functionally, catalyzes the specific phosphorylation of 1,6-anhydro-N-acetylmuramic acid (anhMurNAc) with the simultaneous cleavage of the 1,6-anhydro ring, generating MurNAc-6-P. Is required for the utilization of anhMurNAc either imported from the medium or derived from its own cell wall murein, and thus plays a role in cell wall recycling. This is Anhydro-N-acetylmuramic acid kinase from Acidithiobacillus ferrooxidans (strain ATCC 23270 / DSM 14882 / CIP 104768 / NCIMB 8455) (Ferrobacillus ferrooxidans (strain ATCC 23270)).